The chain runs to 292 residues: Acetylglutamate kinase (292 aa).

Substrate-binding positions include 64–65 (GG), Arg-86, and Asn-190.

It belongs to the acetylglutamate kinase family. ArgB subfamily.

It localises to the cytoplasm. The enzyme catalyses N-acetyl-L-glutamate + ATP = N-acetyl-L-glutamyl 5-phosphate + ADP. It participates in amino-acid biosynthesis; L-arginine biosynthesis; N(2)-acetyl-L-ornithine from L-glutamate: step 2/4. In terms of biological role, catalyzes the ATP-dependent phosphorylation of N-acetyl-L-glutamate. In Geobacter metallireducens (strain ATCC 53774 / DSM 7210 / GS-15), this protein is Acetylglutamate kinase.